The primary structure comprises 158 residues: Ribosome maturation factor RimP (158 aa).

This sequence belongs to the RimP family.

It is found in the cytoplasm. In terms of biological role, required for maturation of 30S ribosomal subunits. This chain is Ribosome maturation factor RimP, found in Aquifex aeolicus (strain VF5).